A 360-amino-acid chain; its full sequence is Glycerol-1-phosphate dehydrogenase [NAD(P)+] (360 aa).

NAD(+)-binding positions include 108-112 and 130-133; these read GRVID and TAAS. Aspartate 135 lines the substrate pocket. Serine 139 contacts NAD(+). Substrate is bound at residue aspartate 182. Zn(2+) is bound by residues aspartate 182 and histidine 262. Histidine 266 is a substrate binding site. Residue histidine 278 coordinates Zn(2+).

The protein belongs to the glycerol-1-phosphate dehydrogenase family. It depends on Zn(2+) as a cofactor.

Its subcellular location is the cytoplasm. The catalysed reaction is sn-glycerol 1-phosphate + NAD(+) = dihydroxyacetone phosphate + NADH + H(+). It carries out the reaction sn-glycerol 1-phosphate + NADP(+) = dihydroxyacetone phosphate + NADPH + H(+). It functions in the pathway membrane lipid metabolism; glycerophospholipid metabolism. Its function is as follows. Catalyzes the NAD(P)H-dependent reduction of dihydroxyacetonephosphate (DHAP or glycerone phosphate) to glycerol 1-phosphate (G1P). The G1P thus generated is used as the glycerophosphate backbone of phospholipids in the cellular membranes of Archaea. The polypeptide is Glycerol-1-phosphate dehydrogenase [NAD(P)+] (Methanoculleus marisnigri (strain ATCC 35101 / DSM 1498 / JR1)).